Here is a 600-residue protein sequence, read N- to C-terminus: Elongation factor 4 (600 aa).

Positions 5–187 constitute a tr-type G domain; sequence SRIRNFSIIA…DLIKKIPPPK (183 aa). GTP is bound by residues 17–22 and 134–137; these read DHGKST and NKMD.

The protein belongs to the TRAFAC class translation factor GTPase superfamily. Classic translation factor GTPase family. LepA subfamily.

It localises to the cell inner membrane. It carries out the reaction GTP + H2O = GDP + phosphate + H(+). In terms of biological role, required for accurate and efficient protein synthesis under certain stress conditions. May act as a fidelity factor of the translation reaction, by catalyzing a one-codon backward translocation of tRNAs on improperly translocated ribosomes. Back-translocation proceeds from a post-translocation (POST) complex to a pre-translocation (PRE) complex, thus giving elongation factor G a second chance to translocate the tRNAs correctly. Binds to ribosomes in a GTP-dependent manner. The chain is Elongation factor 4 from Marinobacter nauticus (strain ATCC 700491 / DSM 11845 / VT8) (Marinobacter aquaeolei).